Consider the following 56-residue polypeptide: Hydrophobic protein LTI6A (56 aa).

Transmembrane regions (helical) follow at residues 11–31 and 34–54; these read IILA…CGIE and ICLL…VWVI.

This sequence belongs to the UPF0057 (PMP3) family. Expressed in shoot of cold stressed seedlings.

Its subcellular location is the membrane. Its function is as follows. Plays a role in the regulation of membrane potential. Could mediate a proton leak. The protein is Hydrophobic protein LTI6A (LTI6A) of Oryza sativa subsp. japonica (Rice).